A 151-amino-acid polypeptide reads, in one-letter code: Putative pre-16S rRNA nuclease (151 aa).

This sequence belongs to the YqgF nuclease family.

It is found in the cytoplasm. Functionally, could be a nuclease involved in processing of the 5'-end of pre-16S rRNA. This is Putative pre-16S rRNA nuclease from Prochlorococcus marinus subsp. pastoris (strain CCMP1986 / NIES-2087 / MED4).